An 82-amino-acid chain; its full sequence is MIKQLQHALELQRNAWNNGHENYGASIDVEAEALEILRYFKHLNPAQTALAAELQEKDELKYAKPLASAARKAVRHFVVTLK.

It belongs to the T4likevirus lysis inhibition accessory protein rIII family. Homooligomer. Interacts with holin (via N-terminus).

In terms of biological role, probably binds to the cytoplasmic part of the holin during lysis inhibition and stabilizes the holin-antiholin complex thereby resulting in a robust block of the hole formation. This Escherichia coli (Bacteriophage T4) protein is Lysis inhibition accessory protein (rIII).